The chain runs to 88 residues: Small ribosomal subunit protein bS20 (88 aa).

A disordered region spans residues 1–27 (MANTASAKKMTRKIAKRTAINRSRRSR).

The protein belongs to the bacterial ribosomal protein bS20 family.

Binds directly to 16S ribosomal RNA. This is Small ribosomal subunit protein bS20 from Methylobacterium radiotolerans (strain ATCC 27329 / DSM 1819 / JCM 2831 / NBRC 15690 / NCIMB 10815 / 0-1).